Reading from the N-terminus, the 133-residue chain is Succinate dehydrogenase assembly factor 3, mitochondrial (133 aa).

A mitochondrion-targeting transit peptide spans 1–12 (MNNKLIYRSVRF).

Belongs to the complex I LYR family. SDHAF3 subfamily. As to quaternary structure, interacts with SDH2 within an SDH1-SDH2 subcomplex.

The protein resides in the mitochondrion. It localises to the mitochondrion intermembrane space. The protein localises to the mitochondrion matrix. Plays an essential role in the assembly of succinate dehydrogenase (SDH), an enzyme complex (also referred to as respiratory complex II) that is a component of both the tricarboxylic acid (TCA) cycle and the mitochondrial electron transport chain, and which couples the oxidation of succinate to fumarate with the reduction of ubiquinone (coenzyme Q) to ubiquinol. Promotes maturation of the iron-sulfur protein subunit SDH2 of the SDH catalytic dimer, protecting it from the deleterious effects of oxidants. Acts together with SDHAF1 (SDH6). In Saccharomyces cerevisiae (strain ATCC 204508 / S288c) (Baker's yeast), this protein is Succinate dehydrogenase assembly factor 3, mitochondrial.